The chain runs to 318 residues: NADH-ubiquinone oxidoreductase chain 1 (318 aa).

8 helical membrane-spanning segments follow: residues 2–22, 70–90, 100–120, 147–167, 171–191, 217–237, 254–276, and 294–314; these read FMINVLLLIIPILLAVAFLTL, MFIIAPILALTLALTMWIPLP, LGILFMLAMSSLAVYSILWSG, AIILLSVLLMSGSFTLSTLII, YLWLIFPSWPLAMMWFISTLA, AGPFALFFLAEYANIIMMNIF, LYSINFTMKTLLLTCSFLWIRAS, and LPLTLALCMWHVSLPIMLSSI.

It belongs to the complex I subunit 1 family. In terms of assembly, core subunit of respiratory chain NADH dehydrogenase (Complex I) which is composed of 45 different subunits.

The protein resides in the mitochondrion inner membrane. It catalyses the reaction a ubiquinone + NADH + 5 H(+)(in) = a ubiquinol + NAD(+) + 4 H(+)(out). Its function is as follows. Core subunit of the mitochondrial membrane respiratory chain NADH dehydrogenase (Complex I) which catalyzes electron transfer from NADH through the respiratory chain, using ubiquinone as an electron acceptor. Essential for the catalytic activity and assembly of complex I. This Equus asinus (Donkey) protein is NADH-ubiquinone oxidoreductase chain 1 (MT-ND1).